The primary structure comprises 129 residues: Small ribosomal subunit protein uS11 (129 aa).

This sequence belongs to the universal ribosomal protein uS11 family. As to quaternary structure, part of the 30S ribosomal subunit. Interacts with proteins S7 and S18. Binds to IF-3.

Located on the platform of the 30S subunit, it bridges several disparate RNA helices of the 16S rRNA. Forms part of the Shine-Dalgarno cleft in the 70S ribosome. This chain is Small ribosomal subunit protein uS11, found in Dinoroseobacter shibae (strain DSM 16493 / NCIMB 14021 / DFL 12).